The primary structure comprises 386 residues: Eukaryotic translation initiation factor 3 subunit M (386 aa).

The PCI domain occupies 181–343; the sequence is NSELASKVMI…RKVHISSTMH (163 aa).

Belongs to the eIF-3 subunit M family. Component of the eukaryotic translation initiation factor 3 (eIF-3) complex.

Its subcellular location is the cytoplasm. Its function is as follows. Component of the eukaryotic translation initiation factor 3 (eIF-3) complex, which is involved in protein synthesis of a specialized repertoire of mRNAs and, together with other initiation factors, stimulates binding of mRNA and methionyl-tRNAi to the 40S ribosome. The eIF-3 complex specifically targets and initiates translation of a subset of mRNAs involved in cell proliferation. This is Eukaryotic translation initiation factor 3 subunit M from Culex quinquefasciatus (Southern house mosquito).